The sequence spans 570 residues: FERM domain-containing protein 5 (570 aa).

The FERM domain occupies 17–298 (YSCTVRLLDD…ENQAFYKLEK (282 aa)). The tract at residues 308–353 (SNLFFKGSRFRYSGRVAKEVMESSAKIKREPPEIHRAGMVPSRSCP) is interaction with ROCK1. The interval 344 to 367 (AGMVPSRSCPSITHGPRLSSVPRT) is disordered. Serine 375 is modified (phosphoserine). The disordered stretch occupies residues 385–407 (DSAHSTPVRSTSHGDTFLPHVRS). The span at 388 to 398 (HSTPVRSTSHG) shows a compositional bias: polar residues. A helical membrane pass occupies residues 504-524 (LLLVTMGLLFVLLLLLIILTE).

As to quaternary structure, interacts with CTNND1. Interacts with ITGB5 (via cytoplasmic domain) and ROCK1.

It is found in the membrane. It localises to the cell junction. Its subcellular location is the adherens junction. In terms of biological role, may be involved in regulation of cell migration. May regulate cell-matrix interactions via its interaction with ITGB5 and modifying ITGB5 cytoplasmic tail interactions such as with FERMT2 and TLN1. May regulate ROCK1 kinase activity possibly involved in regulation of actin stress fiber formation. This Homo sapiens (Human) protein is FERM domain-containing protein 5 (FRMD5).